A 252-amino-acid polypeptide reads, in one-letter code: UPF0246 protein LJ_0535 (252 aa).

Belongs to the UPF0246 family.

This Lactobacillus johnsonii (strain CNCM I-12250 / La1 / NCC 533) protein is UPF0246 protein LJ_0535.